A 236-amino-acid chain; its full sequence is LexA repressor (236 aa).

The segment at residues 26 to 46 (FDEMKEALDLASKSGIHRLIT) is a DNA-binding region (H-T-H motif). The disordered stretch occupies residues 84-107 (SPSVIEGGQGRSSPAPRPAANNDD). Residues Ser157 and Lys195 each act as for autocatalytic cleavage activity in the active site.

This sequence belongs to the peptidase S24 family. In terms of assembly, homodimer.

It catalyses the reaction Hydrolysis of Ala-|-Gly bond in repressor LexA.. Functionally, represses a number of genes involved in the response to DNA damage (SOS response), including recA and lexA. In the presence of single-stranded DNA, RecA interacts with LexA causing an autocatalytic cleavage which disrupts the DNA-binding part of LexA, leading to derepression of the SOS regulon and eventually DNA repair. The polypeptide is LexA repressor (Chelativorans sp. (strain BNC1)).